The chain runs to 371 residues: S-adenosylmethionine:tRNA ribosyltransferase-isomerase (371 aa).

This sequence belongs to the QueA family. In terms of assembly, monomer.

It localises to the cytoplasm. The catalysed reaction is 7-aminomethyl-7-carbaguanosine(34) in tRNA + S-adenosyl-L-methionine = epoxyqueuosine(34) in tRNA + adenine + L-methionine + 2 H(+). It functions in the pathway tRNA modification; tRNA-queuosine biosynthesis. Its function is as follows. Transfers and isomerizes the ribose moiety from AdoMet to the 7-aminomethyl group of 7-deazaguanine (preQ1-tRNA) to give epoxyqueuosine (oQ-tRNA). This is S-adenosylmethionine:tRNA ribosyltransferase-isomerase from Nitratidesulfovibrio vulgaris (strain ATCC 29579 / DSM 644 / CCUG 34227 / NCIMB 8303 / VKM B-1760 / Hildenborough) (Desulfovibrio vulgaris).